A 222-amino-acid chain; its full sequence is Octanoyltransferase (222 aa).

The 180-residue stretch at 35 to 214 (GTAPELIWLL…HLDGFLARLD (180 aa)) folds into the BPL/LPL catalytic domain. Residues 73–80 (RGGRYTYH), 145–147 (AIG), and 158–160 (GFS) each bind substrate. Catalysis depends on C176, which acts as the Acyl-thioester intermediate.

This sequence belongs to the LipB family.

Its subcellular location is the cytoplasm. It carries out the reaction octanoyl-[ACP] + L-lysyl-[protein] = N(6)-octanoyl-L-lysyl-[protein] + holo-[ACP] + H(+). Its pathway is protein modification; protein lipoylation via endogenous pathway; protein N(6)-(lipoyl)lysine from octanoyl-[acyl-carrier-protein]: step 1/2. Its function is as follows. Catalyzes the transfer of endogenously produced octanoic acid from octanoyl-acyl-carrier-protein onto the lipoyl domains of lipoate-dependent enzymes. Lipoyl-ACP can also act as a substrate although octanoyl-ACP is likely to be the physiological substrate. In Novosphingobium aromaticivorans (strain ATCC 700278 / DSM 12444 / CCUG 56034 / CIP 105152 / NBRC 16084 / F199), this protein is Octanoyltransferase.